Reading from the N-terminus, the 232-residue chain is Orotidine 5'-phosphate decarboxylase (232 aa).

Substrate contacts are provided by residues Asp13, Lys35, 62–71 (DLKFHDIPNT), Thr122, Arg182, Gln191, Gly211, and Arg212. Lys64 (proton donor) is an active-site residue.

The protein belongs to the OMP decarboxylase family. Type 1 subfamily. As to quaternary structure, homodimer.

The enzyme catalyses orotidine 5'-phosphate + H(+) = UMP + CO2. It participates in pyrimidine metabolism; UMP biosynthesis via de novo pathway; UMP from orotate: step 2/2. Catalyzes the decarboxylation of orotidine 5'-monophosphate (OMP) to uridine 5'-monophosphate (UMP). This is Orotidine 5'-phosphate decarboxylase from Pseudomonas paraeruginosa (strain DSM 24068 / PA7) (Pseudomonas aeruginosa (strain PA7)).